We begin with the raw amino-acid sequence, 191 residues long: Calcium-binding protein L (191 aa).

Gly2 carries N-myristoyl glycine lipidation. 3 consecutive EF-hand domains span residues 25–59, 60–95, and 96–131; these read EQVS…RFKD, YDDA…ITKS, and PVSD…ALNT. Asp73, Asp75, Asn77, Arg79, and Glu84 together coordinate Ca(2+).

The protein belongs to the recoverin family.

This Dictyostelium discoideum (Social amoeba) protein is Calcium-binding protein L (cbpL).